The primary structure comprises 66 residues: Regulator of G-protein signaling 11 (66 aa).

Residues 1 to 66 (EACEELRFGG…DAAQLHIYML (66 aa)) enclose the RGS domain.

As to quaternary structure, heterodimer with Gbeta5. Interacts with RGS7BP, leading to regulate the subcellular location of the heterodimer formed with Gbeta5.

Inhibits signal transduction by increasing the GTPase activity of G protein alpha subunits thereby driving them into their inactive GDP-bound form. The sequence is that of Regulator of G-protein signaling 11 (Rgs11) from Rattus norvegicus (Rat).